The chain runs to 569 residues: Sulfite reductase [NADPH] hemoprotein beta-component (569 aa).

Residues Cys433, Cys439, Cys478, and Cys482 each contribute to the [4Fe-4S] cluster site. Cys482 lines the siroheme pocket.

This sequence belongs to the nitrite and sulfite reductase 4Fe-4S domain family. As to quaternary structure, alpha(8)-beta(8). The alpha component is a flavoprotein, the beta component is a hemoprotein. Siroheme serves as cofactor. It depends on [4Fe-4S] cluster as a cofactor.

The catalysed reaction is hydrogen sulfide + 3 NADP(+) + 3 H2O = sulfite + 3 NADPH + 4 H(+). It functions in the pathway sulfur metabolism; hydrogen sulfide biosynthesis; hydrogen sulfide from sulfite (NADPH route): step 1/1. Its function is as follows. Component of the sulfite reductase complex that catalyzes the 6-electron reduction of sulfite to sulfide. This is one of several activities required for the biosynthesis of L-cysteine from sulfate. In Pseudoalteromonas atlantica (strain T6c / ATCC BAA-1087), this protein is Sulfite reductase [NADPH] hemoprotein beta-component.